The primary structure comprises 501 residues: MAQVINTNSLSLLTQNNLNKSQSALGTAIERLSSGLRINSAKDDAAGQAIANRFTANIKGLTQASRNANDGISIAQTTEGALNEINNNLQRVRELAVQSANSTNSQSDLDSIQAEITQRLNEIDRVSGQTQFNGVKVLAQDNTLTIQVGANDGETIDIDLKQINSQTLGLDTLNVQKKYDVSDTAVAASYSDSKQNIAVPDKTAITAKIGAATSGGAGIKADISFKDGKYYATVSGYDDAADTDKNGTYEVTVAADTGAVTFATTPTVVDLPTDAKAVSKVQQNDTEIAATNAKAALKAAGVADAEADTATLVKMSYTDNNGKVIDGGFAFKTSGGYYAASVDKSGAASLKVTSYVDATTGTEKTAANKLGGADGKTEVVTIDGKTYNASKAAGHNFKAQPELAEAAATTTENPLQKIDAALAQVDALRSDLGAVQNRFNSAITNLGNTVNNLSSARSRIEDSDYATEVSNMSRAQILQQAGTSVLAQANQVPQNVLSLLR.

It belongs to the bacterial flagellin family.

It is found in the secreted. Its subcellular location is the bacterial flagellum. In terms of biological role, flagellin is the subunit protein which polymerizes to form the filaments of bacterial flagella. The sequence is that of Flagellin (fliC) from Salmonella choleraesuis (strain SC-B67).